The chain runs to 75 residues: MKTIMIAFIRGYQKFISPLTPPSCRFYPTCSQYGIEAVKTHGALKGGWLTLKRILKCHPFHPGGVDPVPDKKQKH.

This sequence belongs to the UPF0161 family.

Its subcellular location is the cell membrane. Functionally, could be involved in insertion of integral membrane proteins into the membrane. This Bacillus velezensis (strain DSM 23117 / BGSC 10A6 / LMG 26770 / FZB42) (Bacillus amyloliquefaciens subsp. plantarum) protein is Putative membrane protein insertion efficiency factor.